The chain runs to 174 residues: Guided entry of tail-anchored proteins factor 1 (174 aa).

The Lumenal segment spans residues 1-8; it reads MSASETDR. Residues 9-29 form a helical membrane-spanning segment; it reads WAWLLVLSFVFGCNLLRILLP. At 30–99 the chain is on the cytoplasmic side; the sequence is SLSSFISRVL…VKARTAQLAK (70 aa). A coiled-coil region spans residues 39–94; it reads LQKDAEQESQMRAEIQGMKQELSTVNMMDEFARYARLERKINKMTDKLKTHVKART. An interaction with GET3/TRC40 region spans residues 39–97; the sequence is LQKDAEQESQMRAEIQGMKQELSTVNMMDEFARYARLERKINKMTDKLKTHVKARTAQL. Residues 100 to 120 traverse the membrane as a helical segment; the sequence is IKWFISVAFYILQAALMISLI. Residues 121 to 148 are Lumenal-facing; the sequence is WKYYSVPVAVVPSKWITPLDRLVAFPTR. The helical transmembrane segment at 149 to 169 threads the bilayer; sequence VAGGIGITCWILVCNKVVAIV. Over 170 to 174 the chain is Cytoplasmic; sequence LHPFS.

It belongs to the WRB/GET1 family. In terms of assembly, component of the Golgi to ER traffic (GET) complex, which is composed of GET1, CAMLG/GET2 and GET3. Within the complex, GET1 and CAMLG form a heterotetramer which is stabilized by phosphatidylinositol binding and which binds to the GET3 homodimer. Interacts with CAMLG/GET2 (via C-terminus). GET3 shows a higher affinity for CAMLG than for GET1.

It localises to the endoplasmic reticulum membrane. Required for the post-translational delivery of tail-anchored (TA) proteins to the endoplasmic reticulum. Together with CAMLG/GET2, acts as a membrane receptor for soluble GET3/TRC40, which recognizes and selectively binds the transmembrane domain of TA proteins in the cytosol. Required to ensure correct topology and ER insertion of CAMLG. This is Guided entry of tail-anchored proteins factor 1 from Mus musculus (Mouse).